We begin with the raw amino-acid sequence, 152 residues long: Photosystem II extrinsic protein U, chloroplastic (152 aa).

The N-terminal 35 residues, 1–35, are a transit peptide targeting the chloroplast; the sequence is MDSTAFVGAAAPLRVAAAARSTICMAAADDKPVVS. The N-terminal 24 residues, 36–59, are a transit peptide targeting the thylakoid; the sequence is RRAALTGAAAAALAAVAGSLPALA.

It belongs to the PsbU family. In terms of assembly, PSII is composed of 1 copy each of membrane proteins PsbA, PsbB, PsbC, PsbD, PsbE, PsbF, PsbH, PsbI, PsbJ, PsbK, PsbL, PsbM, PsbT, PsbX, PsbY, PsbZ, Psb30/Ycf12, at least 3 peripheral proteins of the oxygen-evolving complex and a large number of cofactors. It forms dimeric complexes. The oxygen-evolving complex in red algae is composed of PsbO (OEC33), PsbQ', cytochrome c-550 and PsbU. Predicted to be translocated into the thylakoid lumen by the Tat system.

Its subcellular location is the plastid. The protein localises to the chloroplast thylakoid membrane. Its function is as follows. One of the extrinsic, lumenal subunits of photosystem II (PSII). PSII is a light-driven water plastoquinone oxidoreductase, using light energy to abstract electrons from H(2)O, generating a proton gradient subsequently used for ATP formation. The extrinsic proteins stabilize the structure of photosystem II oxygen-evolving complex (OEC), the ion environment of oxygen evolution and protect the OEC against heat-induced inactivation. The protein is Photosystem II extrinsic protein U, chloroplastic of Pyropia yezoensis (Susabi-nori).